Consider the following 770-residue polypeptide: Amyloid-beta precursor protein (770 aa).

The first 17 residues, 1–17 (MLPGLALLLLAAWTARA), serve as a signal peptide directing secretion. Over 18–701 (LEVPTDGNAG…AEDVGSNKGA (684 aa)) the chain is Extracellular. The segment at 28-123 (LLAEPQIAMF…PYRCLVGEFV (96 aa)) is GFLD subdomain. Residues 28–189 (LLAEPQIAMF…RGVEFVCCPL (162 aa)) enclose the E1 domain. Intrachain disulfides connect cysteine 38–cysteine 62, cysteine 73–cysteine 117, cysteine 98–cysteine 105, cysteine 133–cysteine 187, cysteine 144–cysteine 174, and cysteine 158–cysteine 186. 96 to 110 (NWCKRGRKQCKTHPH) provides a ligand contact to heparin. A cuBD subdomain region spans residues 131 to 189 (DKCKFLHQERMDVCETHLHWHTVAKETCSEKSTNLHDYGMLLPCGIDKFRGVEFVCCPL). 3 residues coordinate Cu(2+): histidine 147, histidine 151, and tyrosine 168. The tract at residues 181 to 188 (GVEFVCCP) is zinc-binding. 3 residues coordinate Zn(2+): glutamate 183, cysteine 186, and cysteine 187. Over residues 194–207 (DNVDSADAEEDDSD) the composition is skewed to acidic residues. Residues 194–284 (DNVDSADAEE…TTTTTTESVE (91 aa)) are disordered. Serine 198 is subject to Phosphoserine; by CK2. A Phosphoserine; by CK1 modification is found at serine 206. Sulfotyrosine occurs at positions 217 and 262. Residues 228–264 (VAEEEEVAEVEEEEADDDEDDEDGDEVEEEAEEPYEE) are compositionally biased toward acidic residues. Over residues 268-281 (RTTSIATTTTTTTE) the composition is skewed to low complexity. Cystine bridges form between cysteine 291/cysteine 341, cysteine 300/cysteine 324, and cysteine 316/cysteine 337. Residues 291-341 (CSEQAETGPCRAMISRWYFDVTEGKCAPFFYGGCGGNRNNFDTEEYCMAVC) enclose the BPTI/Kunitz inhibitor domain. Sulfotyrosine is present on tyrosine 336. The OX-2 signature appears at 344–365 (VMSQSLLKTTQEPLARDPVKLP). The region spanning 374–565 (AVDKYLETPG…EEIQDEVDEL (192 aa)) is the E2 domain. Residues 391–423 (FQKAKERLEAKHRERMSQVMREWEEAERQAKNL) are heparin-binding. A Phosphoserine modification is found at serine 441. The segment at 491–522 (FNMLKKYVRAEQKDRQHTLKHFEHVRMVDPKK) is heparin-binding. Tyrosine 497 carries the post-translational modification Phosphotyrosine. The collagen-binding stretch occupies residues 523-540 (AAQIRSQVMTHLRVIYER). N-linked (GlcNAc...) asparagine glycans are attached at residues asparagine 542 and asparagine 571. The Cu(2+) site is built by histidine 677, tyrosine 681, histidine 684, and histidine 685. Residues histidine 677, tyrosine 681, histidine 684, and histidine 685 each coordinate Zn(2+). An interaction with PSEN1 region spans residues 695–722 (VGSNKGAIIGLMVGGVVIATVIVITLVM). A helical membrane pass occupies residues 702-722 (IIGLMVGGVVIATVIVITLVM). Residues 723–770 (LKKKQYTSIHHGVVEVDAAVTPEERHLSKMQQNGYENPTYKFFEQMQN) lie on the Cytoplasmic side of the membrane. The short motif at 724 to 734 (KKKQYTSIHHG) is the Basolateral sorting signal element. The residue at position 729 (threonine 729) is a Phosphothreonine. Serine 730 carries the phosphoserine; by APP-kinase I modification. The tract at residues 732-751 (HHGVVEVDAAVTPEERHLSK) is interaction with G(o)-alpha. Threonine 743 is subject to Phosphothreonine; by CDK5 and MAPK10. The tract at residues 756–770 (GYENPTYKFFEQMQN) is required for the interaction with KIF5B and for anterograde transport in axons. Phosphotyrosine; by ABL1 is present on tyrosine 757. Positions 757–762 (YENPTY) match the YENPXY motif; contains endocytosis signal motif. Lysine 763 is covalently cross-linked (Glycyl lysine isopeptide (Lys-Gly) (interchain with G-Cter in ubiquitin)).

Belongs to the APP family. Binds, via its C-terminus, to the PID domain of several cytoplasmic proteins, including APBB family members, the APBA family, MAPK8IP1, SHC1 and NUMB and DAB1. Binding to DAB1 inhibits its serine phosphorylation. Interacts (via NPXY motif) with DAB2 (via PID domain); the interaction is impaired by tyrosine phosphorylation of the NPXY motif. Also interacts with GPCR-like protein BPP, APPBP1, IB1, KNS2 (via its TPR domains), APPBP2 (via BaSS) and DDB1. In vitro, it binds MAPT via the MT-binding domains. Associates with microtubules in the presence of ATP and in a kinesin-dependent manner. Interacts, through a C-terminal domain, with GNAO1. Amyloid-beta protein 42 binds CHRNA7 in hippocampal neurons. Amyloid-beta associates with HADH2. Interacts with CPEB1, ANKS1B and AGER. Interacts with ITM2B. Interacts with ITM2C. Interacts with IDE. Can form homodimers; dimerization is enhanced in the presence of Cu(2+) ions. Can form homodimers; this is promoted by heparin binding. Amyloid-beta protein 40 interacts with S100A9. CTF-alpha product of APP interacts with GSAP. Interacts with SORL1 (via N-terminal ectodomain); this interaction retains APP in the trans-Golgi network and reduces processing into soluble APP-alpha and amyloid-beta peptides. The C99 fragment also interacts with SORL1. Interacts with PLD3. Interacts with VDAC1. Interacts with NSG1; could regulate APP processing. Amyloid-beta protein 42 interacts with FPR2. Interacts (via transmembrane region) with PSEN1; the interaction is direct. Interacts with LRRK2. Interacts (via cytoplasmic domain) with KIF5B. Interacts (via C-terminus) with APBB2/FE65L1 (via C-terminus). Interacts (via intracellular domain) with APBB3. Proteolytically processed under normal cellular conditions. Cleavage either by alpha-secretase, beta-secretase or theta-secretase leads to generation and extracellular release of soluble APP peptides, S-APP-alpha and S-APP-beta, and the retention of corresponding membrane-anchored C-terminal fragments, C80, C83 and C99. Subsequent processing of C80 and C83 by gamma-secretase yields P3 peptides. This is the major secretory pathway and is non-amyloidogenic. Alternatively, presenilin/nicastrin-mediated gamma-secretase processing of C99 releases the amyloid-beta proteins, amyloid-beta protein 40 and amyloid-beta protein 42, major components of amyloid plaques, and the cytotoxic C-terminal fragments, gamma-CTF(50), gamma-CTF(57) and gamma-CTF(59). PSEN1 cleavage is more efficient with C83 than with C99 as substrate (in vitro). Amyloid-beta protein 40 and Amyloid-beta protein 42 are cleaved by ACE. Many other minor amyloid-beta peptides, amyloid-beta 1-X peptides, are found in cerebral spinal fluid (CSF) including the amyloid-beta X-15 peptides, produced from the cleavage by alpha-secretase. In terms of processing, proteolytically cleaved by caspases during neuronal apoptosis. Cleavage at Asp-739 by either caspase-3, -8 or -9 results in the production of the neurotoxic C31 peptide and the increased production of amyloid-beta peptides. Post-translationally, N- and O-glycosylated. Phosphorylation in the C-terminal on tyrosine, threonine and serine residues is neuron-specific. Phosphorylation can affect APP processing, neuronal differentiation and interaction with other proteins. Phosphorylated on Thr-743 in neuronal cells by Cdc5 kinase and Mapk10, in dividing cells by Cdc2 kinase in a cell-cycle dependent manner with maximal levels at the G2/M phase and, in vitro, by GSK-3-beta. The Thr-743 phosphorylated form causes a conformational change which reduces binding of Fe65 family members. In dopaminergic (DA) neurons, phosphorylation on Thr-743 by LRKK2 promotes the production and the nuclear translocation of the APP intracellular domain (AICD) which induces DA neuron apoptosis. Phosphorylation on Tyr-757 is required for SHC binding. Phosphorylated in the extracellular domain by casein kinases on both soluble and membrane-bound APP. This phosphorylation is inhibited by heparin. In terms of processing, trophic-factor deprivation triggers the cleavage of surface APP by beta-secretase to release sAPP-beta which is further cleaved to release an N-terminal fragment of APP (N-APP). Post-translationally, amyloid-beta peptides are degraded by IDE. Sulfated on tyrosine residues.

The protein localises to the cell membrane. The protein resides in the membrane. It is found in the perikaryon. Its subcellular location is the cell projection. It localises to the growth cone. The protein localises to the clathrin-coated pit. The protein resides in the early endosome. It is found in the cytoplasmic vesicle. Its subcellular location is the endoplasmic reticulum. It localises to the golgi apparatus. The protein localises to the secreted. The protein resides in the cell surface. It is found in the nucleus. Its subcellular location is the cytoplasm. In terms of biological role, functions as a cell surface receptor and performs physiological functions on the surface of neurons relevant to neurite growth, neuronal adhesion and axonogenesis. Interaction between APP molecules on neighboring cells promotes synaptogenesis. Involved in cell mobility and transcription regulation through protein-protein interactions. Can promote transcription activation through binding to APBB1-KAT5 and inhibit Notch signaling through interaction with Numb. Couples to apoptosis-inducing pathways such as those mediated by G(o) and JIP. Inhibits G(o)-alpha ATPase activity. Acts as a kinesin I membrane receptor, mediating the axonal transport of beta-secretase and presenilin 1. By acting as a kinesin I membrane receptor, plays a role in axonal anterograde transport of cargo towards synapses in axons. May be involved in copper homeostasis/oxidative stress through copper ion reduction. In vitro, copper-metallated APP induces neuronal death directly or is potentiated through Cu(2+)-mediated low-density lipoprotein oxidation. Can regulate neurite outgrowth through binding to components of the extracellular matrix such as heparin and collagen I and IV. Induces a AGER-dependent pathway that involves activation of p38 MAPK, resulting in internalization of amyloid-beta peptide and mitochondrial dysfunction in cultured cortical neurons. Provides Cu(2+) ions for GPC1 which are required for release of nitric oxide (NO) and subsequent degradation of the heparan sulfate chains on GPC1. Its function is as follows. Amyloid-beta peptides are lipophilic metal chelators with metal-reducing activity. Binds transient metals such as copper, zinc and iron. The gamma-CTF peptides as well as the caspase-cleaved peptides, including C31, are potent enhancers of neuronal apoptosis. This chain is Amyloid-beta precursor protein, found in Pan troglodytes (Chimpanzee).